A 159-amino-acid polypeptide reads, in one-letter code: Nascent polypeptide-associated complex subunit beta (159 aa).

2 disordered regions span residues 1–39 and 121–159; these read MDME…GMDD and ESYQ…DKVE. Over residues 23 to 32 the composition is skewed to basic residues; the sequence is TPRRKVKNVH. Residues 36 to 101 enclose the NAC-A/B domain; it reads GMDDKKLQTS…GEDKELTELV (66 aa). Residues 136–153 show a composition bias toward acidic residues; that stretch reads KDDDEDDDDIPDLVEGEN.

This sequence belongs to the NAC-beta family. As to quaternary structure, part of the nascent polypeptide-associated complex (NAC), consisting of EGD2 and EGD1. NAC associates with ribosomes via EGD1.

Its subcellular location is the cytoplasm. It localises to the nucleus. In terms of biological role, component of the nascent polypeptide-associated complex (NAC), a dynamic component of the ribosomal exit tunnel, protecting the emerging polypeptides from interaction with other cytoplasmic proteins to ensure appropriate nascent protein targeting. The NAC complex also promotes mitochondrial protein import by enhancing productive ribosome interactions with the outer mitochondrial membrane and blocks the inappropriate interaction of ribosomes translating non-secretory nascent polypeptides with translocation sites in the membrane of the endoplasmic reticulum. EGD1 may act as a transcription factor that exert a negative effect on the expression of several genes that are transcribed by RNA polymerase II. The protein is Nascent polypeptide-associated complex subunit beta (egd1) of Botryotinia fuckeliana (strain B05.10) (Noble rot fungus).